The primary structure comprises 240 residues: Regulatory protein HlyX (240 aa).

The essential for the oxygen-regulated activity stretch occupies residues 15–28; it reads CTIHCQNCSISQLC. The HTH crp-type domain occupies 163–236; sequence MSAEEKLAAF…GKYITINRMD (74 aa). The H-T-H motif DNA-binding region spans 196–215; sequence RGDIGNYLGLTIETISRLLG.

The protein localises to the cytoplasm. Functionally, confers a hemolytic phenotype on E.coli. May regulate, rather than mediate, hemolytic activity. In Actinobacillus pleuropneumoniae (Haemophilus pleuropneumoniae), this protein is Regulatory protein HlyX (hlyX).